Reading from the N-terminus, the 147-residue chain is Large ribosomal subunit protein uL15 (147 aa).

The disordered stretch occupies residues 1 to 55 (MKLDNLAPQPGAKKRKRRVGRGIAAGQGASCGFGMRGQKSRSGRPTRPGFEGGQM). The segment covering 23–35 (IAAGQGASCGFGM) has biased composition (gly residues).

This sequence belongs to the universal ribosomal protein uL15 family. As to quaternary structure, part of the 50S ribosomal subunit.

Binds to the 23S rRNA. This is Large ribosomal subunit protein uL15 from Synechococcus elongatus (strain ATCC 33912 / PCC 7942 / FACHB-805) (Anacystis nidulans R2).